We begin with the raw amino-acid sequence, 308 residues long: Peroxisomal targeting signal 2 receptor (308 aa).

6 WD repeats span residues 57–88 (DVEDSLFGVRWSQNCENQVYACCGDGSLRLFD), 101–132 (EHKAEIVAIDTNTVDRRIVVTGSWDGTIKLWL), 145–176 (GSNSRILTVATHYSSPNLLGYTSSDGLCKFWD), 187–218 (EIPNQITCMNWSKSNHRMVYTADNNNLVYCYD), 231–262 (GHQLAVRSIKSSNSAHDLLATASYDMTSRIFD), and 274–306 (LHSEFVRDVDWSDFGDGSWIASVGWDESLYIWN).

This sequence belongs to the WD repeat peroxin-7 family. In terms of assembly, interacts with PEX21.

It localises to the cytoplasm. It is found in the cytosol. The protein localises to the peroxisome matrix. Functionally, receptor required for the peroxisomal import of proteins containing a C-terminal PTS2-type peroxisomal targeting signal, such as 3-oxoacyl-CoA thiolase. Specifically binds to cargo proteins containing a PTS2 peroxisomal targeting signal in the cytosol. Cargo protein-binding triggers interaction with PEX21 and formation of a ternary complex composed of PEX21 and PEX7 along with PTS2-containing cargo proteins, which is tranlocated into peroxisomes by passing through the PEX13-PEX14 docking complex. The polypeptide is Peroxisomal targeting signal 2 receptor (pex7) (Schizosaccharomyces pombe (strain 972 / ATCC 24843) (Fission yeast)).